The chain runs to 418 residues: Light-independent protochlorophyllide reductase subunit N (418 aa).

3 residues coordinate [4Fe-4S] cluster: C17, C42, and C103.

Belongs to the BchN/ChlN family. As to quaternary structure, protochlorophyllide reductase is composed of three subunits; ChlL, ChlN and ChlB. Forms a heterotetramer of two ChlB and two ChlN subunits. Requires [4Fe-4S] cluster as cofactor.

It catalyses the reaction chlorophyllide a + oxidized 2[4Fe-4S]-[ferredoxin] + 2 ADP + 2 phosphate = protochlorophyllide a + reduced 2[4Fe-4S]-[ferredoxin] + 2 ATP + 2 H2O. It functions in the pathway porphyrin-containing compound metabolism; chlorophyll biosynthesis (light-independent). Its function is as follows. Component of the dark-operative protochlorophyllide reductase (DPOR) that uses Mg-ATP and reduced ferredoxin to reduce ring D of protochlorophyllide (Pchlide) to form chlorophyllide a (Chlide). This reaction is light-independent. The NB-protein (ChlN-ChlB) is the catalytic component of the complex. This chain is Light-independent protochlorophyllide reductase subunit N, found in Prochlorococcus marinus (strain SARG / CCMP1375 / SS120).